A 500-amino-acid polypeptide reads, in one-letter code: Trehalose-6-phosphate synthase (500 aa).

Arg-28 is a binding site for D-glucose 6-phosphate. Position 48–49 (48–49 (GG)) interacts with UDP-alpha-D-glucose. Residues Tyr-108 and Asp-162 each contribute to the D-glucose 6-phosphate site. Arg-304 and Lys-309 together coordinate UDP-alpha-D-glucose. Arg-342 contributes to the D-glucose 6-phosphate binding site. 407 to 411 (LVAKE) lines the UDP-alpha-D-glucose pocket.

It belongs to the glycosyltransferase 20 family. As to quaternary structure, homotetramer.

The catalysed reaction is ADP-alpha-D-glucose + D-glucose 6-phosphate = alpha,alpha-trehalose 6-phosphate + ADP + H(+). It carries out the reaction CDP-alpha-D-glucose + D-glucose 6-phosphate = alpha,alpha-trehalose 6-phosphate + CDP + H(+). It catalyses the reaction GDP-alpha-D-glucose + D-glucose 6-phosphate = alpha,alpha-trehalose 6-phosphate + GDP + H(+). The enzyme catalyses TDP-alpha-D-glucose + D-glucose 6-phosphate = 5-methyl-UDP + alpha,alpha-trehalose 6-phosphate + H(+). The catalysed reaction is D-glucose 6-phosphate + UDP-alpha-D-glucose = alpha,alpha-trehalose 6-phosphate + UDP + H(+). It participates in glycan biosynthesis; trehalose biosynthesis. Probably involved in the osmoprotection via the biosynthesis of trehalose and in the production of glycogen and alpha-glucan via the TreS-Pep2 branch involved in the biosynthesis of maltose-1-phosphate (M1P). Catalyzes the transfer of glucose from UDP-glucose (UDP-Glc) to D-glucose 6-phosphate (Glc-6-P) to form trehalose-6-phosphate. Probably also able to use ADP-Glc, CDP-Glc, GDP-Glc and TDP-Glc as glucosyl donors. This Mycobacterium bovis (strain ATCC BAA-935 / AF2122/97) protein is Trehalose-6-phosphate synthase.